A 353-amino-acid chain; its full sequence is Holliday junction branch migration complex subunit RuvB (353 aa).

A large ATPase domain (RuvB-L) region spans residues 4 to 190; it reads TDKLQAPRVI…FGIVARLEFY (187 aa). ATP contacts are provided by residues leucine 29, arginine 30, glycine 71, lysine 74, threonine 75, threonine 76, 137–139, arginine 180, tyrosine 190, and arginine 227; that span reads EDF. Threonine 75 contacts Mg(2+). The interval 191–261 is small ATPAse domain (RuvB-S); sequence TPHELAYIVG…VADAALLMLD (71 aa). The segment at 264–353 is head domain (RuvB-H); that stretch reads HLGLDLMDRK…DESAELFSAP (90 aa). Positions 319 and 324 each coordinate DNA.

The protein belongs to the RuvB family. As to quaternary structure, homohexamer. Forms an RuvA(8)-RuvB(12)-Holliday junction (HJ) complex. HJ DNA is sandwiched between 2 RuvA tetramers; dsDNA enters through RuvA and exits via RuvB. An RuvB hexamer assembles on each DNA strand where it exits the tetramer. Each RuvB hexamer is contacted by two RuvA subunits (via domain III) on 2 adjacent RuvB subunits; this complex drives branch migration. In the full resolvosome a probable DNA-RuvA(4)-RuvB(12)-RuvC(2) complex forms which resolves the HJ.

It localises to the cytoplasm. It carries out the reaction ATP + H2O = ADP + phosphate + H(+). In terms of biological role, the RuvA-RuvB-RuvC complex processes Holliday junction (HJ) DNA during genetic recombination and DNA repair, while the RuvA-RuvB complex plays an important role in the rescue of blocked DNA replication forks via replication fork reversal (RFR). RuvA specifically binds to HJ cruciform DNA, conferring on it an open structure. The RuvB hexamer acts as an ATP-dependent pump, pulling dsDNA into and through the RuvAB complex. RuvB forms 2 homohexamers on either side of HJ DNA bound by 1 or 2 RuvA tetramers; 4 subunits per hexamer contact DNA at a time. Coordinated motions by a converter formed by DNA-disengaged RuvB subunits stimulates ATP hydrolysis and nucleotide exchange. Immobilization of the converter enables RuvB to convert the ATP-contained energy into a lever motion, pulling 2 nucleotides of DNA out of the RuvA tetramer per ATP hydrolyzed, thus driving DNA branch migration. The RuvB motors rotate together with the DNA substrate, which together with the progressing nucleotide cycle form the mechanistic basis for DNA recombination by continuous HJ branch migration. Branch migration allows RuvC to scan DNA until it finds its consensus sequence, where it cleaves and resolves cruciform DNA. The polypeptide is Holliday junction branch migration complex subunit RuvB (Aromatoleum aromaticum (strain DSM 19018 / LMG 30748 / EbN1) (Azoarcus sp. (strain EbN1))).